The following is a 445-amino-acid chain: Oxysterols receptor LXR-alpha (445 aa).

Disordered stretches follow at residues 1-34 and 62-86; these read MSLW…QGGN and TALL…KKGP. The segment at 1 to 94 is transactivation AF-1; required for ligand-independent transactivation function; that stretch reads MSLWLEAAVP…GPAPKMLGNE (94 aa). The nuclear receptor DNA-binding region spans 93–168; it reads NELCSVCGDK…AGMREECVLS (76 aa). 2 consecutive NR C4-type zinc fingers follow at residues 96–116 and 132–156; these read CSVC…CEGC and CHSG…LRKC. Residues 178 to 200 are disordered; that stretch reads KRQEEEQAQATSVSPRVSSPPQV. The span at 189–200 shows a compositional bias: low complexity; that stretch reads SVSPRVSSPPQV. Serine 191 is subject to Phosphoserine. Residues 203–445 form a transactivation AF-2; required for ligand-dependent transactivation function; mediates interaction with CCAR2 region; that stretch reads QLSPEQLGMI…LLSEIWDVHE (243 aa). Residues 207-445 enclose the NR LBD domain; the sequence is EQLGMIEKLV…LLSEIWDVHE (239 aa).

This sequence belongs to the nuclear hormone receptor family. NR1 subfamily. As to quaternary structure, heterodimer of NR1H3 and RXR (retinoic acid receptor). Interacts with CCAR2 (via N-terminus) in a ligand-independent manner. Interacts with SIRT1 and this interaction is inhibited by CCAR2. In terms of processing, ubiquitinated by UBR5, leading to its degradation: UBR5 specifically recognizes and binds ligand-bound NR1H3 when it is not associated with coactivators (NCOAs). In presence of NCOAs, the UBR5-degron is not accessible, preventing its ubiquitination and degradation. In terms of tissue distribution, in adults it is expressed in spleen, pituitary, lung, liver, and fat. Weaker expression is observed in several other tissues.

The protein localises to the nucleus. Its subcellular location is the cytoplasm. In terms of biological role, nuclear receptor that exhibits a ligand-dependent transcriptional activation activity. Interaction with retinoic acid receptor (RXR) shifts RXR from its role as a silent DNA-binding partner to an active ligand-binding subunit in mediating retinoid responses through target genes defined by LXRES. LXRES are DR4-type response elements characterized by direct repeats of two similar hexanuclotide half-sites spaced by four nucleotides. Plays an important role in the regulation of cholesterol homeostasis, regulating cholesterol uptake through MYLIP-dependent ubiquitination of LDLR, VLDLR and LRP8. Interplays functionally with RORA for the regulation of genes involved in liver metabolism. Induces LPCAT3-dependent phospholipid remodeling in endoplasmic reticulum (ER) membranes of hepatocytes, driving SREBF1 processing and lipogenesis. Via LPCAT3, triggers the incorporation of arachidonate into phosphatidylcholines of ER membranes, increasing membrane dynamics and enabling triacylglycerols transfer to nascent very low-density lipoprotein (VLDL) particles. Via LPCAT3 also counteracts lipid-induced ER stress response and inflammation, likely by modulating SRC kinase membrane compartmentalization and limiting the synthesis of lipid inflammatory mediators. This is Oxysterols receptor LXR-alpha (Nr1h3) from Rattus norvegicus (Rat).